A 329-amino-acid polypeptide reads, in one-letter code: Peroxidase 51 (329 aa).

A signal peptide spans 1-25 (MVVMNKTNLLLLILSLFLAINLSSA). 4 cysteine pairs are disulfide-bonded: cysteine 36–cysteine 119, cysteine 69–cysteine 74, cysteine 125–cysteine 325, and cysteine 204–cysteine 236. Histidine 67 (proton acceptor) is an active-site residue. 5 residues coordinate Ca(2+): aspartate 68, valine 71, glycine 73, aspartate 75, and serine 77. Proline 167 provides a ligand contact to substrate. Residue histidine 197 participates in heme b binding. Threonine 198 lines the Ca(2+) pocket. A glycan (N-linked (GlcNAc...) asparagine) is linked at asparagine 215. The Ca(2+) site is built by aspartate 249, threonine 252, and aspartate 257.

It belongs to the peroxidase family. Classical plant (class III) peroxidase subfamily. The cofactor is heme b. Ca(2+) serves as cofactor.

Its subcellular location is the secreted. It catalyses the reaction 2 a phenolic donor + H2O2 = 2 a phenolic radical donor + 2 H2O. In terms of biological role, removal of H(2)O(2), oxidation of toxic reductants, biosynthesis and degradation of lignin, suberization, auxin catabolism, response to environmental stresses such as wounding, pathogen attack and oxidative stress. These functions might be dependent on each isozyme/isoform in each plant tissue. This chain is Peroxidase 51 (PER51), found in Arabidopsis thaliana (Mouse-ear cress).